The chain runs to 329 residues: NADH-quinone oxidoreductase subunit H (329 aa).

8 consecutive transmembrane segments (helical) span residues 11 to 31, 81 to 101, 114 to 134, 154 to 174, 187 to 207, 238 to 258, 270 to 290, and 309 to 329; these read IVVAILKAIVILLVVVVCGAL, LIFTLAPIVAMSALLMAFAVV, IGLLFFFAMAGLAVYAVLFAG, ISYEVFMALALMGIVAQTGSF, TWFIIPQFLGFCTFFIAGVAV, FFVGEYIGIVLISALLVTLFF, QLSFIWFALKTAFFIMLFILL, and FCLPLTLLNLLVTGAFVLAAQ.

It belongs to the complex I subunit 1 family. NDH-1 is composed of 13 different subunits. Subunits NuoA, H, J, K, L, M, N constitute the membrane sector of the complex.

The protein resides in the cell inner membrane. The enzyme catalyses a quinone + NADH + 5 H(+)(in) = a quinol + NAD(+) + 4 H(+)(out). Functionally, NDH-1 shuttles electrons from NADH, via FMN and iron-sulfur (Fe-S) centers, to quinones in the respiratory chain. The immediate electron acceptor for the enzyme in this species is believed to be ubiquinone. Couples the redox reaction to proton translocation (for every two electrons transferred, four hydrogen ions are translocated across the cytoplasmic membrane), and thus conserves the redox energy in a proton gradient. This subunit may bind ubiquinone. The protein is NADH-quinone oxidoreductase subunit H of Azotobacter vinelandii (strain DJ / ATCC BAA-1303).